The sequence spans 248 residues: Probable transcriptional regulatory protein Oter_1471 (248 aa).

Belongs to the TACO1 family.

The protein localises to the cytoplasm. The polypeptide is Probable transcriptional regulatory protein Oter_1471 (Opitutus terrae (strain DSM 11246 / JCM 15787 / PB90-1)).